A 485-amino-acid chain; its full sequence is Podocalyxin (485 aa).

The first 24 residues, 1 to 24 (MRPTLALSALLLLQLLLLSTPSLS), serve as a signal peptide directing secretion. The segment at 22–267 (SLSQDNGNKT…STPSSTWTSG (246 aa)) is disordered. Over 25–386 (QDNGNKTDTS…PPEVNEDRFS (362 aa)) the chain is Extracellular. The span at 26 to 57 (DNGNKTDTSDITSIDQNQDKPATNQPSNATPK) shows a compositional bias: polar residues. N29 and N82 each carry an N-linked (GlcNAc...) asparagine glycan. A compositionally biased stretch (low complexity) spans 58 to 109 (SSVQPPTPTSISTSSPDPKATQSSNSSVTTTSDSTTDRTSSSTSTVPTTSNS). Composition is skewed to polar residues over residues 110–128 (GQTV…TALP) and 135–149 (NASS…STKL). 3 N-linked (GlcNAc...) asparagine glycosylation sites follow: N135, N144, and N156. Residues 150–161 (PSTPTTNSTASP) show a composition bias toward low complexity. Composition is skewed to polar residues over residues 163–176 (QPVS…TTVQ), 186–228 (DNTT…QPTG), and 235–253 (SVPT…TPVV). N-linked (GlcNAc...) asparagine glycosylation occurs at N187. A compositionally biased stretch (low complexity) spans 254–267 (SQGPSTPSSTWTSG). N287 is a glycosylation site (N-linked (GlcNAc...) asparagine). The chain crosses the membrane as a helical span at residues 387 to 407 (LPLIITIVCMASFLLLVAALY). Residues 408–485 (GCCHQRISQR…DLDEEEDTHL (78 aa)) lie on the Cytoplasmic side of the membrane. The residue at position 445 (T445) is a Phosphothreonine. S464 carries the post-translational modification Phosphoserine. T483 is subject to Phosphothreonine.

The protein belongs to the podocalyxin family. As to quaternary structure, monomer; when associated with the membrane raft. Oligomer; when integrated in the apical membrane. Interacts with NHERF2. Interacts (via the C-terminal PDZ-binding motif DTHL) with NHERF1 (via the PDZ domains); the interaction take place early in the secretory pathway and is necessary for its apical membrane sorting. Found in a complex with EZR, PODXL and NHERF2. Associates with the actin cytoskeleton through complex formation with EZR and NHERF2. Interacts (via the C-terminal PDZ-binding motif DTHL) with NHERF1 (via the PDZ domains); interaction is not detected in glomerular epithelium cells. Interacts (via the C-terminal PDZ-binding motif DTHL) with NHERF2 (via the PDZ 1 domain); interaction is detected in glomerular epithelium cells. Interacts with EZR. Post-translationally, N- and O-linked glycosylated. Sialoglycoprotein. As to expression, glomerular epithelium cell (podocyte) (at protein level).

It is found in the apical cell membrane. The protein resides in the cell projection. Its subcellular location is the microvillus. It localises to the membrane raft. The protein localises to the lamellipodium. It is found in the filopodium. The protein resides in the ruffle. Its subcellular location is the membrane. Functionally, involved in the regulation of both adhesion and cell morphology and cancer progression. Functions as an anti-adhesive molecule that maintains an open filtration pathway between neighboring foot processes in the podocyte by charge repulsion. Acts as a pro-adhesive molecule, enhancing the adherence of cells to immobilized ligands, increasing the rate of migration and cell-cell contacts in an integrin-dependent manner. Induces the formation of apical actin-dependent microvilli. Involved in the formation of a preapical plasma membrane subdomain to set up initial epithelial polarization and the apical lumen formation during renal tubulogenesis. Plays a role in cancer development and aggressiveness by inducing cell migration and invasion through its interaction with the actin-binding protein EZR. Affects EZR-dependent signaling events, leading to increased activities of the MAPK and PI3K pathways in cancer cells. This Rattus norvegicus (Rat) protein is Podocalyxin (Podxl).